A 703-amino-acid polypeptide reads, in one-letter code: MIVKAEIGNQDPIYIEANKYAHQADSSILISQGGTKVLVTVCVSEEPLCGIDFAPLSVDYRERSFAWGKIPGGFIKREGKPTDREVLISRVIDRPLRPLMPKGFLNEVVVTCLTLSADDKYDPDVLAITGASAALVSSSVPFEGPIAGMRVCRVNGEFIINPTYEQRKNSDMDIVMALSKDAIVMVEGGAKEVEESVLLDALFFGLEKGQTLIKAQEELVDSLKPEKKPIGHIGLSDDMANKLKEIASSKILEAFSIEDKKERSKALKDVYAQAMQKLGISKEQEFDFLVSFKDLESQLMREQILKYKKRIDGRKETDIRPITIEMHPLERPHGSAVFTRGQTQALATVTLAPKDEAQLVETIFEGETFKRFMLHYNFPPFSTGEARPWGPPRRREIGHGALAERALEPLLAKEEDFPYIIRVVSDILESNGSSSMATVCAGSLALFDAGVPMKKHVAGIAMGLIKDGDNFVILTDILGDEDHLGDMDFKVAGTRDGVTSVQMDIKIKGLSKDIMIKALNQAKEARMFILDKLYEAIPEPNKEVSKYAPKAQVMKIPEDKVGLVIGPAGKNIKYIKEQFGASVWIDGANAYINAPTIEAVNKAADFINSLIQEVEVGGVYEGKVIRVENYGLFVEVLPGKVGLLHASAMTEKPTINVGDTIKVKVMAIDEQNRLNLCSPDYQKPENQERPRKEQLNRKPHHRK.

Mg(2+)-binding residues include aspartate 482 and aspartate 488. Residues 549–607 form the KH domain; it reads PKAQVMKIPEDKVGLVIGPAGKNIKYIKEQFGASVWIDGANAYINAPTIEAVNKAADFI. In terms of domain architecture, S1 motif spans 617-679; the sequence is GGVYEGKVIR…EQNRLNLCSP (63 aa). The segment at 677 to 703 is disordered; the sequence is CSPDYQKPENQERPRKEQLNRKPHHRK. Residues 682 to 696 are compositionally biased toward basic and acidic residues; the sequence is QKPENQERPRKEQLN.

The protein belongs to the polyribonucleotide nucleotidyltransferase family. Requires Mg(2+) as cofactor.

It is found in the cytoplasm. It carries out the reaction RNA(n+1) + phosphate = RNA(n) + a ribonucleoside 5'-diphosphate. In terms of biological role, involved in mRNA degradation. Catalyzes the phosphorolysis of single-stranded polyribonucleotides processively in the 3'- to 5'-direction. The chain is Polyribonucleotide nucleotidyltransferase from Hydrogenobaculum sp. (strain Y04AAS1).